Consider the following 234-residue polypeptide: Phosphoribosylaminoimidazole-succinocarboxamide synthase (234 aa).

The protein belongs to the SAICAR synthetase family.

The enzyme catalyses 5-amino-1-(5-phospho-D-ribosyl)imidazole-4-carboxylate + L-aspartate + ATP = (2S)-2-[5-amino-1-(5-phospho-beta-D-ribosyl)imidazole-4-carboxamido]succinate + ADP + phosphate + 2 H(+). It participates in purine metabolism; IMP biosynthesis via de novo pathway; 5-amino-1-(5-phospho-D-ribosyl)imidazole-4-carboxamide from 5-amino-1-(5-phospho-D-ribosyl)imidazole-4-carboxylate: step 1/2. In Staphylococcus epidermidis (strain ATCC 35984 / DSM 28319 / BCRC 17069 / CCUG 31568 / BM 3577 / RP62A), this protein is Phosphoribosylaminoimidazole-succinocarboxamide synthase.